The primary structure comprises 152 residues: Membrane-spanning 4-domains subfamily A member 13 (152 aa).

The next 4 membrane-spanning stretches (helical) occupy residues 1-21, 32-52, 66-86, and 111-131; these read MIGI…MGQI, TYKT…VFLI, TLII…LTII, and ILLF…IYSC.

Belongs to the MS4A family.

The protein resides in the membrane. Its function is as follows. May be involved in signal transduction as a component of a multimeric receptor complex. The polypeptide is Membrane-spanning 4-domains subfamily A member 13 (MS4A13) (Homo sapiens (Human)).